The sequence spans 153 residues: Protein-export protein SecB (153 aa).

Belongs to the SecB family. In terms of assembly, homotetramer, a dimer of dimers. One homotetramer interacts with 1 SecA dimer.

Its subcellular location is the cytoplasm. Its function is as follows. One of the proteins required for the normal export of preproteins out of the cell cytoplasm. It is a molecular chaperone that binds to a subset of precursor proteins, maintaining them in a translocation-competent state. It also specifically binds to its receptor SecA. This is Protein-export protein SecB from Erwinia tasmaniensis (strain DSM 17950 / CFBP 7177 / CIP 109463 / NCPPB 4357 / Et1/99).